The chain runs to 492 residues: NAD(P)H-quinone oxidoreductase subunit 2 A, chloroplastic (492 aa).

13 consecutive transmembrane segments (helical) span residues 6-26 (LLLFHGSFIFPECILIFGLIL), 39-59 (TPWLYFISSTSLVMSITALLF), 81-101 (VFQFLILLCSTLCIPLSVEYI), 106-126 (MAITEFLLFVLTATLGGMFLC), 131-151 (LITIFVAPECFSLCSYLLSGY), 165-185 (YLLMGGASSSILVHGFSWLYG), 209-229 (PGISIALISITVGIGFKLSPA), 277-297 (WHLLLEILAILSMILGNLIAI), 305-325 (MLAYSSIGQIGYVIIGIIVGD), 329-349 (GYASMITYMLFYISMNLGTFA), 377-397 (ALSSALCLLSLGGIPPLAGFF), 400-420 (LHLFWCGWQAGLYFLVSIGLL), and 466-486 (MIVCVIASTIPGISMNPIIAI).

It belongs to the complex I subunit 2 family. NDH is composed of at least 16 different subunits, 5 of which are encoded in the nucleus.

The protein resides in the plastid. Its subcellular location is the chloroplast thylakoid membrane. The enzyme catalyses a plastoquinone + NADH + (n+1) H(+)(in) = a plastoquinol + NAD(+) + n H(+)(out). The catalysed reaction is a plastoquinone + NADPH + (n+1) H(+)(in) = a plastoquinol + NADP(+) + n H(+)(out). Its function is as follows. NDH shuttles electrons from NAD(P)H:plastoquinone, via FMN and iron-sulfur (Fe-S) centers, to quinones in the photosynthetic chain and possibly in a chloroplast respiratory chain. The immediate electron acceptor for the enzyme in this species is believed to be plastoquinone. Couples the redox reaction to proton translocation, and thus conserves the redox energy in a proton gradient. The protein is NAD(P)H-quinone oxidoreductase subunit 2 A, chloroplastic of Illicium oligandrum (Star anise).